Reading from the N-terminus, the 253-residue chain is MLNKRVIPCLDVNNGRVVKGTSFVNLRDAGDPVELAARYYREGADELVFLDISATTEERKTMAEVVEKVSKEVFIPLCVGGGLRSIADMTTLLRAGADKVSVNSAAVSDPDLISRGAEKFGRQCIVVAIDAKREGNSWQVYTHSGKKPTGLDAVEWAMKAEQLGAGEILLTSIDADGKNTGYDNELNREVSSRLNIPVIASGGAGSPEDLYNALDKGQADAVLAASIFHYGRYSIAEVKKYLKSKGLPVRLEN.

Residues Asp11 and Asp130 contribute to the active site.

The protein belongs to the HisA/HisF family. Heterodimer of HisH and HisF.

It localises to the cytoplasm. It catalyses the reaction 5-[(5-phospho-1-deoxy-D-ribulos-1-ylimino)methylamino]-1-(5-phospho-beta-D-ribosyl)imidazole-4-carboxamide + L-glutamine = D-erythro-1-(imidazol-4-yl)glycerol 3-phosphate + 5-amino-1-(5-phospho-beta-D-ribosyl)imidazole-4-carboxamide + L-glutamate + H(+). It functions in the pathway amino-acid biosynthesis; L-histidine biosynthesis; L-histidine from 5-phospho-alpha-D-ribose 1-diphosphate: step 5/9. In terms of biological role, IGPS catalyzes the conversion of PRFAR and glutamine to IGP, AICAR and glutamate. The HisF subunit catalyzes the cyclization activity that produces IGP and AICAR from PRFAR using the ammonia provided by the HisH subunit. This is Imidazole glycerol phosphate synthase subunit HisF from Dehalococcoides mccartyi (strain ATCC BAA-2100 / JCM 16839 / KCTC 5957 / BAV1).